Here is a 66-residue protein sequence, read N- to C-terminus: Cold shock-like protein CspLA (66 aa).

One can recognise a CSD domain in the interval glycine 4–valine 63.

As to quaternary structure, homodimer.

Its subcellular location is the cytoplasm. In Listeria innocua serovar 6a (strain ATCC BAA-680 / CLIP 11262), this protein is Cold shock-like protein CspLA (cspLA).